Consider the following 473-residue polypeptide: Hexaprenyl pyrophosphate synthase, mitochondrial (473 aa).

Residues lysine 84, arginine 87, and histidine 186 each coordinate isopentenyl diphosphate. Residues aspartate 193 and aspartate 197 each contribute to the Mg(2+) site. Arginine 202 contributes to the an all-trans-polyprenyl diphosphate binding site. Position 203 (arginine 203) interacts with isopentenyl diphosphate. Lysine 323, threonine 324, glutamine 361, and lysine 378 together coordinate an all-trans-polyprenyl diphosphate.

Belongs to the FPP/GGPP synthase family. Mg(2+) serves as cofactor.

Its subcellular location is the mitochondrion inner membrane. Its pathway is cofactor biosynthesis; ubiquinone biosynthesis. In terms of biological role, assembly of polyisoprenoid side chains. The polyprenyl synthase of coenzyme Q biosynthesis catalyzes the formation from isopentenyl diphosphate of all trans-polyprenyl pyrophosphates generally ranging in length of between 6 and 10 isoprene units depending on the species. The polypeptide is Hexaprenyl pyrophosphate synthase, mitochondrial (COQ1) (Saccharomyces cerevisiae (strain ATCC 204508 / S288c) (Baker's yeast)).